We begin with the raw amino-acid sequence, 275 residues long: Trans-aconitate 2-methyltransferase (275 aa).

The protein belongs to the methyltransferase superfamily. Tam family.

It localises to the cytoplasm. It catalyses the reaction trans-aconitate + S-adenosyl-L-methionine = (E)-3-(methoxycarbonyl)pent-2-enedioate + S-adenosyl-L-homocysteine. Functionally, catalyzes the S-adenosylmethionine monomethyl esterification of trans-aconitate. This is Trans-aconitate 2-methyltransferase from Pseudomonas paraeruginosa (strain DSM 24068 / PA7) (Pseudomonas aeruginosa (strain PA7)).